Reading from the N-terminus, the 431-residue chain is Serine--tRNA ligase (431 aa).

A disordered region spans residues glutamine 41 to glutamate 66. Threonine 240–glutamate 242 provides a ligand contact to L-serine. Residue arginine 271–glutamate 273 participates in ATP binding. Glutamate 294 serves as a coordination point for L-serine. ATP is bound at residue glutamate 358–serine 361. Serine 392 lines the L-serine pocket.

It belongs to the class-II aminoacyl-tRNA synthetase family. Type-1 seryl-tRNA synthetase subfamily. As to quaternary structure, homodimer. The tRNA molecule binds across the dimer.

The protein localises to the cytoplasm. It carries out the reaction tRNA(Ser) + L-serine + ATP = L-seryl-tRNA(Ser) + AMP + diphosphate + H(+). The enzyme catalyses tRNA(Sec) + L-serine + ATP = L-seryl-tRNA(Sec) + AMP + diphosphate + H(+). The protein operates within aminoacyl-tRNA biosynthesis; selenocysteinyl-tRNA(Sec) biosynthesis; L-seryl-tRNA(Sec) from L-serine and tRNA(Sec): step 1/1. Catalyzes the attachment of serine to tRNA(Ser). Is also able to aminoacylate tRNA(Sec) with serine, to form the misacylated tRNA L-seryl-tRNA(Sec), which will be further converted into selenocysteinyl-tRNA(Sec). The polypeptide is Serine--tRNA ligase (Aeromonas hydrophila subsp. hydrophila (strain ATCC 7966 / DSM 30187 / BCRC 13018 / CCUG 14551 / JCM 1027 / KCTC 2358 / NCIMB 9240 / NCTC 8049)).